The chain runs to 687 residues: DNA ligase (687 aa).

NAD(+) is bound by residues 33 to 37 (DAEFD), 83 to 84 (SL), and Glu-113. The N6-AMP-lysine intermediate role is filled by Lys-115. Arg-136, Glu-176, Lys-292, and Lys-316 together coordinate NAD(+). Residues Cys-410, Cys-413, Cys-429, and Cys-435 each coordinate Zn(2+). Positions 599–687 (SVPRTLAGVT…GPPAEVGEPT (89 aa)) constitute a BRCT domain.

The protein belongs to the NAD-dependent DNA ligase family. LigA subfamily. Requires Mg(2+) as cofactor. Mn(2+) serves as cofactor.

The catalysed reaction is NAD(+) + (deoxyribonucleotide)n-3'-hydroxyl + 5'-phospho-(deoxyribonucleotide)m = (deoxyribonucleotide)n+m + AMP + beta-nicotinamide D-nucleotide.. DNA ligase that catalyzes the formation of phosphodiester linkages between 5'-phosphoryl and 3'-hydroxyl groups in double-stranded DNA using NAD as a coenzyme and as the energy source for the reaction. It is essential for DNA replication and repair of damaged DNA. This is DNA ligase from Mycobacterium marinum (strain ATCC BAA-535 / M).